The following is a 500-amino-acid chain: NAD(P)H-quinone oxidoreductase chain 4, chloroplastic (500 aa).

A run of 14 helical transmembrane segments spans residues 4–24 (FPWL…IFFF), 35–55 (YTIC…CYHF), 87–107 (IGPV…AWPV), 113–130 (LFHF…GSFS), 134–154 (LLLF…LLSM), 167–187 (FILY…GMGL), 208–228 (ALEI…LPII), 242–262 (HYST…YGLV), 272–292 (AHSI…IYAA), 305–325 (IAYS…SITD), 330–350 (GAIL…FLAG), 386–406 (LALP…GIIT), 416–436 (ILIT…SLSM), and 463–483 (FVSI…DFVF).

This sequence belongs to the complex I subunit 4 family.

The protein resides in the plastid. It localises to the chloroplast thylakoid membrane. The catalysed reaction is a plastoquinone + NADH + (n+1) H(+)(in) = a plastoquinol + NAD(+) + n H(+)(out). It catalyses the reaction a plastoquinone + NADPH + (n+1) H(+)(in) = a plastoquinol + NADP(+) + n H(+)(out). The chain is NAD(P)H-quinone oxidoreductase chain 4, chloroplastic from Nandina domestica (Heavenly bamboo).